A 776-amino-acid polypeptide reads, in one-letter code: Heat shock protein 110 (776 aa).

A disordered region spans residues 741 to 776 (ILNKKKPAAPAPPKKEEPQPAAGDQPQSQPGEMDVD).

This sequence belongs to the heat shock protein 70 family.

This chain is Heat shock protein 110, found in Caenorhabditis elegans.